A 229-amino-acid chain; its full sequence is E3 ubiquitin ligase TRIM40 (229 aa).

The segment at 14 to 57 (CPICQESLKEAVSTNCGHLFCRVCLTQHVEKASASGVFCCPLCR) adopts an RING-type zinc-finger fold. A B box-type zinc finger spans residues 66–107 (GTGYICPNHQKRVCRFCEESRLLLCVECLVSPEHMSHHELTI). Residues Cys71, His74, Cys93, and His99 each contribute to the Zn(2+) site. A coiled-coil region spans residues 107-154 (IENALSHYKERLNRRSRKLRKDIAELQRLKAQQEKKLQALQQWLGQLE).

The protein belongs to the TRIM/RBCC family. As to quaternary structure, interacts with NEDD8.

The enzyme catalyses S-ubiquitinyl-[E2 ubiquitin-conjugating enzyme]-L-cysteine + [acceptor protein]-L-lysine = [E2 ubiquitin-conjugating enzyme]-L-cysteine + N(6)-ubiquitinyl-[acceptor protein]-L-lysine.. Its function is as follows. E3 ubiquitin-protein ligase that plays a role in the limitation of the innate immune response. Mediates inhibition of the RLR signaling pathway by ubiquitinating RIGI and IFIH1 receptors, leading to their proteasomal degradation. Also promotes the neddylation of IKBKG/NEMO, stabilizing NFKBIA, and thereby inhibiting of NF-kappa-B nuclear translocation and activation. This is E3 ubiquitin ligase TRIM40 (TRIM40) from Pan troglodytes (Chimpanzee).